The chain runs to 93 residues: RNA-binding protein Hfq (93 aa).

Residues 9-68 form the Sm domain; it reads DPFLNALRRERVPVSIYLVNGIKLQGQVESFDQFVILLKNTVSQMVYKHAISTVVPARPF. A disordered region spans residues 70–93; the sequence is VNSHTAAPSPAGGFNGQQDDNNDQ.

It belongs to the Hfq family. Homohexamer.

RNA chaperone that binds small regulatory RNA (sRNAs) and mRNAs to facilitate mRNA translational regulation in response to envelope stress, environmental stress and changes in metabolite concentrations. Also binds with high specificity to tRNAs. This is RNA-binding protein Hfq from Shewanella sediminis (strain HAW-EB3).